We begin with the raw amino-acid sequence, 243 residues long: MRAPQHNSDFSRTVDQLADDPNPYEPEIGSMPQNDLTRADLDNVNKTGTTTIGISTADGVVIATDMRASLGGRFVSNKNVQKVEQIHPTGALTLVGSVGGAQSFISSLRAEVNLYESRRGEQMSIDALATLAGNFARGGPFFAIHPILGGVDEEGSHVYSIDPAGGVMEDDYTVTGSGMQLAYGHLEQAYEEDMSNEEAVSVAAHGIKSAVERDTGSGNGVFLCEITDEGVDIHGHHDFDEVL.

Residues 1-14 (MRAPQHNSDFSRTV) show a composition bias toward polar residues. Positions 1–34 (MRAPQHNSDFSRTVDQLADDPNPYEPEIGSMPQN) are disordered. A propeptide spans 1-48 (MRAPQHNSDFSRTVDQLADDPNPYEPEIGSMPQNDLTRADLDNVNKTG) (removed in mature form; by autocatalysis). The active-site Nucleophile is Thr49.

The protein belongs to the peptidase T1B family. The 20S proteasome core is composed of 14 alpha and 14 beta subunits that assemble into four stacked heptameric rings, resulting in a barrel-shaped structure. The two inner rings, each composed of seven catalytic beta subunits, are sandwiched by two outer rings, each composed of seven alpha subunits. The catalytic chamber with the active sites is on the inside of the barrel. Has a gated structure, the ends of the cylinder being occluded by the N-termini of the alpha-subunits. Is capped at one or both ends by the proteasome regulatory ATPase, PAN.

It localises to the cytoplasm. It carries out the reaction Cleavage of peptide bonds with very broad specificity.. With respect to regulation, the formation of the proteasomal ATPase PAN-20S proteasome complex, via the docking of the C-termini of PAN into the intersubunit pockets in the alpha-rings, triggers opening of the gate for substrate entry. Interconversion between the open-gate and close-gate conformations leads to a dynamic regulation of the 20S proteasome proteolysis activity. In terms of biological role, component of the proteasome core, a large protease complex with broad specificity involved in protein degradation. This Haloterrigena turkmenica (strain ATCC 51198 / DSM 5511 / JCM 9101 / NCIMB 13204 / VKM B-1734 / 4k) (Halococcus turkmenicus) protein is Proteasome subunit beta 1.